A 474-amino-acid polypeptide reads, in one-letter code: ATP synthase subunit beta 1 (474 aa).

157-164 (GGAGVGKT) provides a ligand contact to ATP.

This sequence belongs to the ATPase alpha/beta chains family. F-type ATPases have 2 components, CF(1) - the catalytic core - and CF(0) - the membrane proton channel. CF(1) has five subunits: alpha(3), beta(3), gamma(1), delta(1), epsilon(1). CF(0) has three main subunits: a(1), b(2) and c(9-12). The alpha and beta chains form an alternating ring which encloses part of the gamma chain. CF(1) is attached to CF(0) by a central stalk formed by the gamma and epsilon chains, while a peripheral stalk is formed by the delta and b chains.

It is found in the cell inner membrane. It carries out the reaction ATP + H2O + 4 H(+)(in) = ADP + phosphate + 5 H(+)(out). In terms of biological role, produces ATP from ADP in the presence of a proton gradient across the membrane. The catalytic sites are hosted primarily by the beta subunits. This is ATP synthase subunit beta 1 from Albidiferax ferrireducens (strain ATCC BAA-621 / DSM 15236 / T118) (Rhodoferax ferrireducens).